Here is a 1296-residue protein sequence, read N- to C-terminus: Phosphoribosylformylglycinamidine synthase (1296 aa).

Residues 304–323 form a disordered region; sequence WPGAATGSGGEIRDEGATGR. Residues 306–317 and Ala677 each bind ATP; that span reads GAATGSGGEIRD. The Mg(2+) site is built by Asp678, Glu717, Asn721, and Asp885. Ser887 lines the ATP pocket. The span at 1000-1013 shows a compositional bias: basic and acidic residues; the sequence is PDCADQEHQAKQDE. The tract at residues 1000–1019 is disordered; sequence PDCADQEHQAKQDESDPGLN. The 254-residue stretch at 1043–1296 folds into the Glutamine amidotransferase type-1 domain; that stretch reads VAVLREQGVN…MFRNARKQLG (254 aa). Residue Cys1136 is the Nucleophile of the active site. Catalysis depends on residues His1261 and Glu1263.

In the N-terminal section; belongs to the FGAMS family. In terms of assembly, monomer.

It localises to the cytoplasm. It carries out the reaction N(2)-formyl-N(1)-(5-phospho-beta-D-ribosyl)glycinamide + L-glutamine + ATP + H2O = 2-formamido-N(1)-(5-O-phospho-beta-D-ribosyl)acetamidine + L-glutamate + ADP + phosphate + H(+). Its pathway is purine metabolism; IMP biosynthesis via de novo pathway; 5-amino-1-(5-phospho-D-ribosyl)imidazole from N(2)-formyl-N(1)-(5-phospho-D-ribosyl)glycinamide: step 1/2. Phosphoribosylformylglycinamidine synthase involved in the purines biosynthetic pathway. Catalyzes the ATP-dependent conversion of formylglycinamide ribonucleotide (FGAR) and glutamine to yield formylglycinamidine ribonucleotide (FGAM) and glutamate. The polypeptide is Phosphoribosylformylglycinamidine synthase (Yersinia pestis bv. Antiqua (strain Nepal516)).